Reading from the N-terminus, the 413-residue chain is Cell surface GPI-anchored protein ECM33 (413 aa).

An N-terminal signal peptide occupies residues Met1–Ala20. 11 N-linked (GlcNAc...) asparagine glycosylation sites follow: Asn93, Asn102, Asn172, Asn209, Asn222, Asn227, Asn279, Asn290, Asn306, Asn322, and Asn382. Residues Tyr347 to Gly390 form a disordered region. Low complexity predominate over residues Ser356–Gly390. Residue Gly390 is the site of GPI-anchor amidated glycine attachment. Residues Ala391 to Ile413 constitute a propeptide, removed in mature form.

The protein belongs to the SPS2 family.

It localises to the cell membrane. Its subcellular location is the secreted. It is found in the cell wall. Functionally, cell surface protein required for proper cell wall integrity and for the correct assembly of the mannoprotein outer layer of the cell wall. The chain is Cell surface GPI-anchored protein ECM33 (ECM331) from Candida albicans (strain SC5314 / ATCC MYA-2876) (Yeast).